We begin with the raw amino-acid sequence, 132 residues long: Phosphomevalonate dehydratase small subunit (132 aa).

S62 serves as the catalytic Proton acceptor.

The protein belongs to the AcnX type II small subunit family. As to quaternary structure, heterodimer composed of a large subunit (PMDh-L) and a small subunit (PMDh-S).

The catalysed reaction is (R)-5-phosphomevalonate = (2E)-3-methyl-5-phosphooxypent-2-enoate + H2O. It functions in the pathway isoprenoid biosynthesis; isopentenyl diphosphate biosynthesis via mevalonate pathway. Its function is as follows. Component of a hydro-lyase that catalyzes the dehydration of mevalonate 5-phosphate (MVA5P) to form trans-anhydromevalonate 5-phosphate (tAHMP). Involved in the archaeal mevalonate (MVA) pathway, which provides fundamental precursors for isoprenoid biosynthesis, such as isopentenyl diphosphate (IPP) and dimethylallyl diphosphate (DMAPP). In Methanocella arvoryzae (strain DSM 22066 / NBRC 105507 / MRE50), this protein is Phosphomevalonate dehydratase small subunit.